Here is an 809-residue protein sequence, read N- to C-terminus: MDVPGPDSDWRSPAFRQKVVAQIEEAMRKAGTGHTKSSTEMESHVFTKAKTREEYLSMVARLIIHFRDIHKKAQGGPDPINALQNLPGGVPGVIGPRPPGAQMGGMGQMSMGPHAMQGVAGGQQGAGAAGPMQQMIQQQQQQQQQQQQQQSIQFQTFQPQQQQQATMQSQQPSAMFQQIRLQQLQQHHQNQQMQHQNQQQQQAQNQQQQNQLHQTRMQQQLQLQQLQQQQQQQLHQQQVHAQAQAQAQAQAQAQAQAQAQAQAQAQAQAQAQAQAQAQAQAQAQAQAQSIQQMQQQQQLQVQAQGQPQVQGQGGAVQMPPHSQQQQVLVPQMVQGQHSQMSALSQQQQLKLQQAMQARMQQQQQQQQQQQQQQQQQQQQQQQQQQQQQQQQQQHQQQQVQQVQQASQLTAVPGQMMPRPGMQIPPRLPRATPNSAIPQNPVAIGGQQMPQAQQMMSSPSPVQVQTPQSMPPPPQPQPSPQPPSSQPNSVSSGPTPSPGGFQPSPSPQPSQSPASSRTPQSYPLQVPSPGPLNTPGNPSSVMSPAGASQSEDQLYMDKLRQLSKYIEPLRRMINKIDKNEDRKKDLSKMKSLLNILTDPNTRCPLKTLQKCEIALEKLKNDMAVPTPPPPPVPCTKKQYLCQPILDAVLANIRSPVFNHSLYRTFAPAMTAIHGPQITGPSIPSRKRKLEDDERQAIPNILQGEVARLNSKFLVNLDPSFCSNNGMVHLICKLDDKNLPSVPPLQLSIPADYPDQSPHWEDDGQQYEANPFLRTVHKNMTSKLLQLPDKHSVTALLNTWAQSVRQACLSA.

3 disordered regions span residues 115 to 137, 183 to 211, and 413 to 549; these read AMQG…QMIQ, QLQQ…QQNQ, and GQMM…ASQS. The span at 119–128 shows a compositional bias: gly residues; sequence VAGGQQGAGA. The span at 446 to 467 shows a compositional bias: low complexity; sequence QQMPQAQQMMSSPSPVQVQTPQ. Residues 468-484 are compositionally biased toward pro residues; that stretch reads SMPPPPQPQPSPQPPSS. Low complexity-rich tracts occupy residues 485 to 502 and 510 to 520; these read QPNS…GFQP and QSPASSRTPQS. The segment covering 533–549 has biased composition (polar residues); the sequence is TPGNPSSVMSPAGASQS.

It belongs to the Mediator complex subunit 15 family. As to quaternary structure, component of the Mediator complex. Interacts with srebf1 and srebf2. Interacts with smad2, smad3 and smad4.

Its subcellular location is the cytoplasm. The protein resides in the nucleus. Its function is as follows. Component of the Mediator complex, a coactivator involved in the regulated transcription of nearly all RNA polymerase II-dependent genes. Mediator functions as a bridge to convey information from gene-specific regulatory proteins to the basal RNA polymerase II transcription machinery. Mediator is recruited to promoters by direct interactions with regulatory proteins and serves as a scaffold for the assembly of a functional preinitiation complex with RNA polymerase II and the general transcription factors. Required for cholesterol-dependent gene regulation. Positively regulates the Nodal signaling pathway. This is Mediator of RNA polymerase II transcription subunit 15 (med15) from Danio rerio (Zebrafish).